A 127-amino-acid polypeptide reads, in one-letter code: Thioredoxin-3, mitochondrial (127 aa).

The transit peptide at 1–21 directs the protein to the mitochondrion; the sequence is MLFYKPVMRMAVRPLKSIRFQ. The 106-residue stretch at 22 to 127 folds into the Thioredoxin domain; it reads SSYTSITKLT…TALEKGIKDL (106 aa). Residues cysteine 55 and cysteine 58 each act as nucleophile in the active site. Cysteine 55 and cysteine 58 are oxidised to a cystine.

The protein belongs to the thioredoxin family.

The protein resides in the mitochondrion. This Saccharomyces cerevisiae (strain ATCC 204508 / S288c) (Baker's yeast) protein is Thioredoxin-3, mitochondrial (TRX3).